We begin with the raw amino-acid sequence, 341 residues long: Methionine import ATP-binding protein MetN 2 (341 aa).

The 240-residue stretch at 2–241 (INLQNVSKIY…PKEEMTKRFV (240 aa)) folds into the ABC transporter domain. 38 to 45 (GYSGAGKS) lines the ATP pocket.

Belongs to the ABC transporter superfamily. Methionine importer (TC 3.A.1.24) family. As to quaternary structure, the complex is composed of two ATP-binding proteins (MetN), two transmembrane proteins (MetI) and a solute-binding protein (MetQ).

Its subcellular location is the cell membrane. The catalysed reaction is L-methionine(out) + ATP + H2O = L-methionine(in) + ADP + phosphate + H(+). It carries out the reaction D-methionine(out) + ATP + H2O = D-methionine(in) + ADP + phosphate + H(+). In terms of biological role, part of the ABC transporter complex MetNIQ involved in methionine import. Responsible for energy coupling to the transport system. This chain is Methionine import ATP-binding protein MetN 2, found in Bacillus licheniformis (strain ATCC 14580 / DSM 13 / JCM 2505 / CCUG 7422 / NBRC 12200 / NCIMB 9375 / NCTC 10341 / NRRL NRS-1264 / Gibson 46).